A 745-amino-acid polypeptide reads, in one-letter code: Polyribonucleotide nucleotidyltransferase (745 aa).

Asp487 and Asp493 together coordinate Mg(2+). The region spanning 554 to 613 is the KH domain; that stretch reads PSTTTIKIDKDKIRDIIGPGGKVIKEICEISGAKIDISDDGTVSIYASDRDKLKVALDKI. The S1 motif domain occupies 623 to 691; the sequence is GEIFNGTVMK…NKGKAKLTIK (69 aa). Positions 691–745 are disordered; it reads KNADKDKSSNNTKPKTNAKDNSEPEQRRDSSKKRAWNEDNNAETAEVITERKYFN. A compositionally biased stretch (basic and acidic residues) spans 707 to 719; it reads NAKDNSEPEQRRD.

This sequence belongs to the polyribonucleotide nucleotidyltransferase family. Mg(2+) is required as a cofactor.

Its subcellular location is the cytoplasm. It catalyses the reaction RNA(n+1) + phosphate = RNA(n) + a ribonucleoside 5'-diphosphate. Its function is as follows. Involved in mRNA degradation. Catalyzes the phosphorolysis of single-stranded polyribonucleotides processively in the 3'- to 5'-direction. This is Polyribonucleotide nucleotidyltransferase from Rickettsia massiliae (strain Mtu5).